The primary structure comprises 378 residues: 1-acyl-sn-glycerol-3-phosphate acyltransferase delta (378 aa).

A helical transmembrane segment spans residues 11 to 31 (FLCHLIFCYVFIVSGLIINTI). The HXXXXD motif motif lies at 96–101 (HKFEID). The next 3 helical transmembrane spans lie at 125–145 (ELAY…VFCT), 307–327 (TLVN…RFVI), and 338–358 (LASF…MIGV).

Belongs to the 1-acyl-sn-glycerol-3-phosphate acyltransferase family.

It localises to the endoplasmic reticulum membrane. It carries out the reaction a 1-acyl-sn-glycero-3-phosphate + an acyl-CoA = a 1,2-diacyl-sn-glycero-3-phosphate + CoA. It catalyses the reaction (4Z,7Z,10Z,13Z,16Z,19Z)-docosahexaenoyl-CoA + 1-hexadecanoyl-sn-glycero-3-phosphate = 1-hexadecanoyl-2-(4Z,7Z,10Z,13Z,16Z,19Z-docosahexaenoyl)-sn-glycero-3-phosphate + CoA. The catalysed reaction is 1-octadecanoyl-sn-glycero-3-phosphate + (9Z,12Z)-octadecadienoyl-CoA = 1-octadecanoyl-2-(9Z,12Z-octadecadienoyl)-sn-glycero-3-phosphate + CoA. The enzyme catalyses 1-octadecanoyl-sn-glycero-3-phosphate + (4Z,7Z,10Z,13Z,16Z,19Z)-docosahexaenoyl-CoA = 1-octadecanoyl-2-(4Z,7Z,10Z,13Z,16Z,19Z-docosahexaenoyl)-sn-glycero-3-phosphate + CoA. It carries out the reaction (4Z,7Z,10Z,13Z,16Z,19Z)-docosahexaenoyl-CoA + 1-(9Z-octadecenoyl)-sn-glycero-3-phosphate = 1-(9Z-octadecenoyl)-2-(4Z,7Z,10Z,13Z,16Z,19Z-docosahexaenoyl)-sn-glycero-3-phosphate + CoA. Its pathway is phospholipid metabolism; CDP-diacylglycerol biosynthesis; CDP-diacylglycerol from sn-glycerol 3-phosphate: step 2/3. Converts 1-acyl-sn-glycerol-3-phosphate (lysophosphatidic acid or LPA) into 1,2-diacyl-sn-glycerol-3-phosphate (phosphatidic acid or PA) by incorporating an acyl moiety at the sn-2 position of the glycerol backbone. Exhibits high acyl-CoA specificity for polyunsaturated fatty acyl-CoA, especially docosahexaenoyl-CoA (22:6-CoA, DHA-CoA). The polypeptide is 1-acyl-sn-glycerol-3-phosphate acyltransferase delta (AGPAT4) (Bos taurus (Bovine)).